The sequence spans 289 residues: Nodulation protein NolT (289 aa).

Positions 1-33 (MFGSAHGDTTSSDTSGRRPLRLVVLPLLLALSS) are cleaved as a signal peptide. Cys-34 is lipidated: N-palmitoyl cysteine. Cys-34 carries the S-diacylglycerol cysteine lipid modification. A helical transmembrane segment spans residues 233-253 (VAVGVGAAVFAVTCYLLFIVL).

The protein belongs to the YscJ lipoprotein family.

It localises to the cell outer membrane. In terms of biological role, regulates cultivar-specific nodulation of soybean. The protein is Nodulation protein NolT (nolT) of Rhizobium fredii (Sinorhizobium fredii).